The primary structure comprises 399 residues: MTDVDESVRRRTAAVSEYRKKLLQHKELESRVRTARENLRGAKKEFNKTEDDLKSLQSVGQIIGEVLRPLDNERLIVKASSGPRYVVGCRSKVDKEKLTSGTRVVLDMTTLTIMRALPREVDPVVYNMLHEDPGNISYSAVGGLGDQIRELRESIELPLMNPELFLRVGIKPPKGVLLYGPPGTGKTLLARAIASNIDANFLKVVSSAIIDKYIGESARLIREMFNYAREHQPCIIFMDEIDAIGGRRFSEGTSADREIQRTLMELLNQLDGFDNLGKVKMIMATNRPDVLDPALLRPGRLDRKIEIPLPNEQSRMDILKIHAAGIAKHGEIDYEAIVKLAEGFNGADLRNICTEAGMFAIRAERDYVIHEDFMKAVRKLSEAKKLESSSHYNADFGKE.

At Thr-2 the chain carries N-acetylthreonine. 180-187 (GPPGTGKT) serves as a coordination point for ATP. Lys-203 participates in a covalent cross-link: Glycyl lysine isopeptide (Lys-Gly) (interchain with G-Cter in ubiquitin).

Belongs to the AAA ATPase family. Component of the 19S regulatory particle (RP/PA700) base subcomplex of the 26S proteasome. The 26S proteasome is composed of a core protease (CP), known as the 20S proteasome, capped at one or both ends by the 19S regulatory particle (RP/PA700). The RP/PA700 complex is composed of at least 17 different subunits in two subcomplexes, the base and the lid, which form the portions proximal and distal to the 20S proteolytic core, respectively.

It is found in the cytoplasm. The protein localises to the nucleus. Functionally, the 26S proteasome is involved in the ATP-dependent degradation of ubiquitinated proteins. The regulatory (or ATPase) complex confers ATP dependency and substrate specificity to the 26S complex. This is 26S proteasome regulatory subunit 10B homolog A (RPT4A) from Arabidopsis thaliana (Mouse-ear cress).